A 218-amino-acid polypeptide reads, in one-letter code: 3,4-dihydroxy-2-butanone 4-phosphate synthase (218 aa).

Residues 37-38 (RE), D42, 150-154 (RSGHT), and E174 each bind D-ribulose 5-phosphate. E38 contacts Mg(2+). H153 lines the Mg(2+) pocket.

The protein belongs to the DHBP synthase family. Homodimer. It depends on Mg(2+) as a cofactor. The cofactor is Mn(2+).

The catalysed reaction is D-ribulose 5-phosphate = (2S)-2-hydroxy-3-oxobutyl phosphate + formate + H(+). The protein operates within cofactor biosynthesis; riboflavin biosynthesis; 2-hydroxy-3-oxobutyl phosphate from D-ribulose 5-phosphate: step 1/1. In terms of biological role, catalyzes the conversion of D-ribulose 5-phosphate to formate and 3,4-dihydroxy-2-butanone 4-phosphate. The chain is 3,4-dihydroxy-2-butanone 4-phosphate synthase from Hamiltonella defensa subsp. Acyrthosiphon pisum (strain 5AT).